An 84-amino-acid polypeptide reads, in one-letter code: Putative defensin-like protein 38 (84 aa).

Residues 1 to 26 form the signal peptide; the sequence is MASSKNGTVLFVSLMILLLISTGVKA. 4 disulfide bridges follow: C28–C84, C41–C65, C50–C76, and C54–C78.

It belongs to the DEFL family.

The protein resides in the secreted. This chain is Putative defensin-like protein 38, found in Arabidopsis thaliana (Mouse-ear cress).